The chain runs to 264 residues: Thymidylate synthase (264 aa).

Arg-21 provides a ligand contact to dUMP. Residue His-51 coordinates (6R)-5,10-methylene-5,6,7,8-tetrahydrofolate. Residue 126–127 (RR) coordinates dUMP. Catalysis depends on Cys-146, which acts as the Nucleophile. DUMP is bound by residues 166-169 (RSAD), Asn-177, and 207-209 (HIY). A (6R)-5,10-methylene-5,6,7,8-tetrahydrofolate-binding site is contributed by Asp-169. Ala-263 is a (6R)-5,10-methylene-5,6,7,8-tetrahydrofolate binding site.

This sequence belongs to the thymidylate synthase family. Bacterial-type ThyA subfamily. Homodimer.

The protein resides in the cytoplasm. The enzyme catalyses dUMP + (6R)-5,10-methylene-5,6,7,8-tetrahydrofolate = 7,8-dihydrofolate + dTMP. It functions in the pathway pyrimidine metabolism; dTTP biosynthesis. Functionally, catalyzes the reductive methylation of 2'-deoxyuridine-5'-monophosphate (dUMP) to 2'-deoxythymidine-5'-monophosphate (dTMP) while utilizing 5,10-methylenetetrahydrofolate (mTHF) as the methyl donor and reductant in the reaction, yielding dihydrofolate (DHF) as a by-product. This enzymatic reaction provides an intracellular de novo source of dTMP, an essential precursor for DNA biosynthesis. This is Thymidylate synthase from Rhizobium meliloti (strain 1021) (Ensifer meliloti).